The following is a 492-amino-acid chain: Signal transduction histidine-protein kinase/phosphatase MprB (492 aa).

The Cytoplasmic portion of the chain corresponds to 1-27; it reads MAFPPNSWRPTGPLPTSSLSLRWRVMM. Residues 28–48 form a helical membrane-spanning segment; it reads LAMSMVALVVVLMAVAVYAVV. Residues 49–165 are Extracellular-facing; sequence SRALYDDLDN…TVQVLRRLGT (117 aa). The helical transmembrane segment at 166–186 threads the bilayer; it reads VLLIVGGIGVAVAAIAGGAVA. The HAMP domain maps to 187 to 239; that stretch reads RAGLRPVGRLTEAAERVARTDDLRPIPVVGSDELARLTEAFNMMLRALAESRE. At 187 to 492 the chain is on the cytoplasmic side; it reads RAGLRPVGRL…DRGGHTVATE (306 aa). Positions 247-467 constitute a Histidine kinase domain; it reads DAGHELRTPL…SVHMLLPGQR (221 aa). Residue His-250 is modified to Phosphohistidine; by autocatalysis. The tract at residues 470–492 is disordered; it reads DPGATRSAEGFVDDRGGHTVATE.

Requires Mg(2+) as cofactor. The cofactor is Mn(2+). Autophosphorylated.

It localises to the cell membrane. It carries out the reaction ATP + protein L-histidine = ADP + protein N-phospho-L-histidine.. Member of the two-component regulatory system MprB/MprA which contributes to maintaining a balance among several systems involved in stress resistance and is required for establishment and maintenance of persistent infection in the host. In response to environmental signals MprB acts both as a membrane-associated protein kinase that undergoes autophosphorylation and subsequently transfers the phosphate to MprA, and a protein phosphatase that dephosphorylates phospho-MprA. The protein is Signal transduction histidine-protein kinase/phosphatase MprB (mprB) of Mycolicibacterium smegmatis (strain ATCC 700084 / mc(2)155) (Mycobacterium smegmatis).